Consider the following 120-residue polypeptide: Nitrogenase-stabilizing/protective protein NifW (120 aa).

Belongs to the NifW family. As to quaternary structure, homotrimer; associates with NifD.

May protect the nitrogenase Fe-Mo protein from oxidative damage. This is Nitrogenase-stabilizing/protective protein NifW from Rhodospirillum rubrum (strain ATCC 11170 / ATH 1.1.1 / DSM 467 / LMG 4362 / NCIMB 8255 / S1).